We begin with the raw amino-acid sequence, 177 residues long: Large ribosomal subunit protein uL6 (177 aa).

Belongs to the universal ribosomal protein uL6 family. Part of the 50S ribosomal subunit.

This protein binds to the 23S rRNA, and is important in its secondary structure. It is located near the subunit interface in the base of the L7/L12 stalk, and near the tRNA binding site of the peptidyltransferase center. The chain is Large ribosomal subunit protein uL6 from Hahella chejuensis (strain KCTC 2396).